The sequence spans 393 residues: Reticulon-like protein 2 (393 aa).

Positions 1–21 are enriched in low complexity; the sequence is MNRNTTTNKNANLNNSRNANA. The disordered stretch occupies residues 1 to 25; sequence MNRNTTTNKNANLNNSRNANAPGEA. The Cytoplasmic segment spans residues 1–60; sequence MNRNTTTNKNANLNNSRNANAPGEAGHQNKTGLIYWTNPSKSGASFAATLVSLLILRNVN. A Reticulon domain is found at 30–236; the sequence is KTGLIYWTNP…SISNENKSST (207 aa). The helical transmembrane segment at 61–81 threads the bilayer; sequence VISVLLKIGYMVLFTSFAVEL. Residues 82 to 149 lie on the Lumenal side of the membrane; sequence STKVLFDKGV…IGVSLYFLHG (68 aa). Residue N137 is glycosylated (N-linked (GlcNAc...) asparagine). Residues 150-170 traverse the membrane as a helical segment; sequence LFAIFSMNTVLIMTTIFLYTV. Residues 171 to 393 are Cytoplasmic-facing; it reads PLIYDRKQAR…HGLKQKLQHA (223 aa). Disordered stretches follow at residues 214–313 and 339–393; these read IIPP…DVKT and GDYN…LQHA. Over residues 220–285 the composition is skewed to polar residues; it reads DEGSYSTSIS…PVSQNENIGT (66 aa). A Phosphoserine modification is found at S278. The segment covering 289-313 has biased composition (basic and acidic residues); that stretch reads GKQEIPTEKDFNNRHENFSKPDVKT. Residues 365-376 show a composition bias toward polar residues; sequence PAESQSIPIKNN. Residues 381-393 are compositionally biased toward basic residues; sequence KTTHGLKQKLQHA.

The protein localises to the endoplasmic reticulum membrane. The chain is Reticulon-like protein 2 (RTN2) from Saccharomyces cerevisiae (strain ATCC 204508 / S288c) (Baker's yeast).